The chain runs to 558 residues: Phosphatase and actin regulator 3 (558 aa).

The span at 1 to 11 (MAASEDGSSCL) shows a compositional bias: polar residues. Disordered regions lie at residues 1–69 (MAAS…KLAT), 81–288 (KKKN…RPLP), and 300–366 (LATK…ENLM). The segment covering 18–33 (QSDPSFLSDSSATSTD) has biased composition (low complexity). The residue at position 69 (T69) is a Phosphothreonine. Residues 92 to 117 (SALEKKMAGRQGREELIKQGLLEMME) form an RPEL 1 repeat. Residues 94–108 (LEKKMAGRQGREELI) are compositionally biased toward basic and acidic residues. Polar residues predominate over residues 144–169 (ETLTSEGAQPGSPSASGTDQVSQDEL). Over residues 228-239 (PSPPLLPTPPPK) the composition is skewed to pro residues. Position 229 is a phosphoserine (S229). T235 carries the post-translational modification Phosphothreonine. Composition is skewed to basic and acidic residues over residues 300-341 (LATK…RDEA) and 354-363 (ATKDSEENKE). RPEL repeat units lie at residues 400–425 (ELLAVKLRNRPSKQELEDRNIFPRRT), 438–463 (MKLSKRLSQRPAVEELERRNILKQRN), and 476–501 (QRLTRKLNQRPTVDELRDRKILIRFS). A coiled-coil region spans residues 449–485 (AVEELERRNILKQRNDQTEQEERREIKQRLTRKLNQR).

This sequence belongs to the phosphatase and actin regulator family. As to quaternary structure, binds PPP1CA and actin; thus inhibiting the protein phosphatase 1 (PP1) activity.

The protein localises to the nucleus matrix. In Mus musculus (Mouse), this protein is Phosphatase and actin regulator 3 (Phactr3).